The following is a 230-amino-acid chain: Large ribosomal subunit protein uL1 (230 aa).

Belongs to the universal ribosomal protein uL1 family. As to quaternary structure, part of the 50S ribosomal subunit.

Functionally, binds directly to 23S rRNA. The L1 stalk is quite mobile in the ribosome, and is involved in E site tRNA release. In terms of biological role, protein L1 is also a translational repressor protein, it controls the translation of the L11 operon by binding to its mRNA. The protein is Large ribosomal subunit protein uL1 of Nitrobacter hamburgensis (strain DSM 10229 / NCIMB 13809 / X14).